The primary structure comprises 104 residues: Small ribosomal subunit protein uS10 (104 aa).

This sequence belongs to the universal ribosomal protein uS10 family. In terms of assembly, part of the 30S ribosomal subunit.

Functionally, involved in the binding of tRNA to the ribosomes. The protein is Small ribosomal subunit protein uS10 of Aquifex aeolicus (strain VF5).